A 92-amino-acid polypeptide reads, in one-letter code: Probable Fe(2+)-trafficking protein (92 aa).

The protein belongs to the Fe(2+)-trafficking protein family.

Could be a mediator in iron transactions between iron acquisition and iron-requiring processes, such as synthesis and/or repair of Fe-S clusters in biosynthetic enzymes. The sequence is that of Probable Fe(2+)-trafficking protein from Xanthomonas campestris pv. campestris (strain 8004).